The chain runs to 436 residues: Cytochrome b5-related protein (436 aa).

The 85-residue stretch at 16 to 100 (PTYRNSALIT…IAKYKVRDAA (85 aa)) folds into the Cytochrome b5 heme-binding domain. 2 residues coordinate heme: His59 and His82.

In terms of tissue distribution, muscle.

In terms of biological role, may play a role in muscle cell metabolism. The chain is Cytochrome b5-related protein (Cyt-b5-r) from Drosophila melanogaster (Fruit fly).